A 533-amino-acid polypeptide reads, in one-letter code: Beta-1,4 N-acetylgalactosaminyltransferase 1 (533 aa).

Residues 1–7 are Cytoplasmic-facing; sequence MRLDRRA. A helical; Signal-anchor for type II membrane protein transmembrane segment spans residues 8–25; sequence LYALVLLLACASLGLLYA. Residues 26-533 lie on the Lumenal side of the membrane; sequence STRDAPGLPN…KHRLQCMTAE (508 aa). 2 N-linked (GlcNAc...) asparagine glycosylation sites follow: Asn-79 and Asn-274. Cysteines 429 and 476 form a disulfide.

It belongs to the glycosyltransferase 2 family. As to quaternary structure, homodimer; disulfide-linked. Strongly expressed in brain, testis, spleen, and to a lesser extent in liver.

The protein resides in the golgi apparatus membrane. The catalysed reaction is a ganglioside GM3 (d18:1(4E)) + UDP-N-acetyl-alpha-D-galactosamine = a ganglioside GM2 (d18:1(4E)) + UDP + H(+). The enzyme catalyses a ganglioside GD3 (d18:1(4E)) + UDP-N-acetyl-alpha-D-galactosamine = a ganglioside GD2 (d18:1(4E)) + UDP + H(+). It carries out the reaction a ganglioside GM3 + UDP-N-acetyl-alpha-D-galactosamine = a ganglioside GM2 + UDP + H(+). It catalyses the reaction a ganglioside GD3 + UDP-N-acetyl-alpha-D-galactosamine = a ganglioside GD2 + UDP + H(+). The catalysed reaction is a ganglioside GD1a + UDP-N-acetyl-alpha-D-galactosamine = a ganglioside GalNAc-GD1a + UDP + H(+). The enzyme catalyses a ganglioside GT3 (d18:1(4E)) + UDP-N-acetyl-alpha-D-galactosamine = a ganglioside GT2 (d18:1(4E)) + UDP + H(+). It carries out the reaction a beta-D-Gal-(1-&gt;4)-beta-D-Glc-(1&lt;-&gt;1)-Cer(d18:1(4E)) + UDP-N-acetyl-alpha-D-galactosamine = a ganglioside GA2 (d18:1(4E)) + UDP + H(+). It catalyses the reaction a neolactoside IV(3)-alpha-NeuGc-nLc4Cer + UDP-N-acetyl-alpha-D-galactosamine = a neolactoside IV(4)-beta-GalNAc-IV(3)-alpha-NeuGc-nLc4Cer + UDP + H(+). It participates in sphingolipid metabolism. Involved in the biosynthesis of gangliosides GM2, GD2, GT2 and GA2 from GM3, GD3, GT3 and GA3, respectively. This chain is Beta-1,4 N-acetylgalactosaminyltransferase 1, found in Rattus norvegicus (Rat).